The primary structure comprises 933 residues: Isoleucine--tRNA ligase (933 aa).

The 'HIGH' region signature appears at 57–67; sequence PYANGNIHVGH. Glu554 contributes to the L-isoleucyl-5'-AMP binding site. A 'KMSKS' region motif is present at residues 595 to 599; sequence KMSKS. Lys598 serves as a coordination point for ATP.

It belongs to the class-I aminoacyl-tRNA synthetase family. IleS type 1 subfamily. Monomer.

The protein localises to the cytoplasm. The enzyme catalyses tRNA(Ile) + L-isoleucine + ATP = L-isoleucyl-tRNA(Ile) + AMP + diphosphate. Its function is as follows. Catalyzes the attachment of isoleucine to tRNA(Ile). As IleRS can inadvertently accommodate and process structurally similar amino acids such as valine, to avoid such errors it has two additional distinct tRNA(Ile)-dependent editing activities. One activity is designated as 'pretransfer' editing and involves the hydrolysis of activated Val-AMP. The other activity is designated 'posttransfer' editing and involves deacylation of mischarged Val-tRNA(Ile). The protein is Isoleucine--tRNA ligase of Streptococcus pyogenes serotype M18 (strain MGAS8232).